Reading from the N-terminus, the 66-residue chain is uncharacterized protein (66 aa).

Residues 1–18 (MSTTSSSSTFSTRTASLS) show a composition bias toward low complexity. The disordered stretch occupies residues 1 to 22 (MSTTSSSSTFSTRTASLSQSYT).

This is an uncharacterized protein from Schizosaccharomyces pombe (strain 972 / ATCC 24843) (Fission yeast).